Consider the following 492-residue polypeptide: Histone-lysine N-methyltransferase ASHH1 (492 aa).

Residues 36–87 form the AWS domain; sequence EDISICECKFDFGDPDSACGERCLNVITNTECTPGYCPCGVYCKNQKFQKCE. In terms of domain architecture, SET spans 84 to 206; the sequence is QKCEYAKTKL…PRTELAYDYN (123 aa). The 17-residue stretch at 213–229 folds into the Post-SET domain; the sequence is AKVRCLCGAVACSGFLG. The segment at 259 to 340 is disordered; the sequence is SAEDELTSEP…NSQEDSSPKT (82 aa). Polar residues predominate over residues 266 to 275; it reads SEPSKNGESN. Basic and acidic residues predominate over residues 277-290; the sequence is NEEKEKDISTENHL. Residues 291 to 306 show a composition bias toward polar residues; the sequence is ESTALNIQQQSDSTPT. Residues 317–326 show a composition bias toward basic and acidic residues; that stretch reads VKTETSEDMK. The span at 328-339 shows a compositional bias: polar residues; sequence LSQNSQEDSSPK.

This sequence belongs to the class V-like SAM-binding methyltransferase superfamily. Histone-lysine methyltransferase family. SET2 subfamily.

Its subcellular location is the nucleus. The protein localises to the chromosome. It is found in the centromere. It carries out the reaction L-lysyl(4)-[histone H3] + 3 S-adenosyl-L-methionine = N(6),N(6),N(6)-trimethyl-L-lysyl(4)-[histone H3] + 3 S-adenosyl-L-homocysteine + 3 H(+). In terms of biological role, histone methyltransferase involved in regulation of flowering time. Required for the expression of the SOC1/AGL20 gene. Required for histone H3 trimethylation on 'Lys-4' (H3K4me3) at the SOC1 locus. Prevents trimethylation on 'Lys-27' (H3K27me3) at the same locus. The chain is Histone-lysine N-methyltransferase ASHH1 (ASHH1) from Arabidopsis thaliana (Mouse-ear cress).